The primary structure comprises 482 residues: Cis-aconitate decarboxylase-like protein oryM (482 aa).

It belongs to the PrpD family.

It participates in secondary metabolite biosynthesis. Its function is as follows. Cis-aconitate decarboxylase-like protein; part of the gene cluster that mediates the biosynthesis of oryzines, natural products with an unusual maleidride backbone. The two subunits of the fungal fatty acid synthase oryfasA and oryfasB probably form octenoic acid. This fatty acid is most likely activated by the acyl-CoA ligase oryP to give octenyl-CoA before the citrate synthase-like protein oryE catalyzes condensation with oxaloacetate to form tricarboxylic acid. The next steps of the pathways are conjectural, but a favorite possible route has been proposed, beginning with decarboxylation and concomitant dehydration by the decarboxylase oryM, followed by tautomerization, which may lead to the production of a diene intermediate. Reduction of this diene intermediate could give the known metabolite piliformic acid. On the pathway to oryzine B and oryzine A, however, hydroxylation of the diene by the alpha-ketoglutarate-dependent dioxygenase oryG and lactonisation by the lactonohydrolases oryH or oryL could give oryzine B directly. Finally, enoyl reduction by the dehydrogenase oryD would then convert oryzine B into oryzine A. This is Cis-aconitate decarboxylase-like protein oryM from Aspergillus oryzae (strain ATCC 42149 / RIB 40) (Yellow koji mold).